The primary structure comprises 210 residues: Cuticle collagen 2C (210 aa).

The tract at residues 11–210 (CTGGQAGPPG…GVFFEDGTRR (200 aa)) is disordered. Composition is skewed to pro residues over residues 40 to 76 (PGRPPVQPCDPIPIPPCKPCPQGRPGPPGPIGPPGEP) and 88 to 103 (DAPPGPPGPKGPPGPP). Positions 105 to 122 (KAGAPGAAGQPGANAPSE) are enriched in low complexity. A compositionally biased stretch (pro residues) spans 123 to 144 (PLVPGPPGPPGPTGPEGPPGPN). Low complexity predominate over residues 167–179 (HPGAPGNAGHPGQ).

Belongs to the cuticular collagen family.

Functionally, nematode cuticles are composed largely of collagen-like proteins. The cuticle functions both as an exoskeleton and as a barrier to protect the worm from its environment. The polypeptide is Cuticle collagen 2C (2C) (Haemonchus contortus (Barber pole worm)).